The sequence spans 240 residues: Pyridoxine 5'-phosphate synthase (240 aa).

N7 contributes to the 3-amino-2-oxopropyl phosphate binding site. Position 9–10 (9–10 (DH)) interacts with 1-deoxy-D-xylulose 5-phosphate. Residue R18 participates in 3-amino-2-oxopropyl phosphate binding. H43 (proton acceptor) is an active-site residue. 1-deoxy-D-xylulose 5-phosphate is bound by residues R45 and H50. The Proton acceptor role is filled by E70. T100 provides a ligand contact to 1-deoxy-D-xylulose 5-phosphate. Residue H191 is the Proton donor of the active site. Residues G192 and 213-214 (GH) contribute to the 3-amino-2-oxopropyl phosphate site.

The protein belongs to the PNP synthase family. Homooctamer; tetramer of dimers.

The protein resides in the cytoplasm. The catalysed reaction is 3-amino-2-oxopropyl phosphate + 1-deoxy-D-xylulose 5-phosphate = pyridoxine 5'-phosphate + phosphate + 2 H2O + H(+). Its pathway is cofactor biosynthesis; pyridoxine 5'-phosphate biosynthesis; pyridoxine 5'-phosphate from D-erythrose 4-phosphate: step 5/5. Its function is as follows. Catalyzes the complicated ring closure reaction between the two acyclic compounds 1-deoxy-D-xylulose-5-phosphate (DXP) and 3-amino-2-oxopropyl phosphate (1-amino-acetone-3-phosphate or AAP) to form pyridoxine 5'-phosphate (PNP) and inorganic phosphate. This chain is Pyridoxine 5'-phosphate synthase, found in Cyanothece sp. (strain PCC 7425 / ATCC 29141).